The following is a 492-amino-acid chain: ATP synthase subunit beta, chloroplastic (492 aa).

170–177 is a binding site for ATP; that stretch reads GGAGVGKT.

Belongs to the ATPase alpha/beta chains family. As to quaternary structure, F-type ATPases have 2 components, CF(1) - the catalytic core - and CF(0) - the membrane proton channel. CF(1) has five subunits: alpha(3), beta(3), gamma(1), delta(1), epsilon(1). CF(0) has four main subunits: a(1), b(1), b'(1) and c(9-12).

Its subcellular location is the plastid. It is found in the chloroplast thylakoid membrane. The enzyme catalyses ATP + H2O + 4 H(+)(in) = ADP + phosphate + 5 H(+)(out). Functionally, produces ATP from ADP in the presence of a proton gradient across the membrane. The catalytic sites are hosted primarily by the beta subunits. This chain is ATP synthase subunit beta, chloroplastic, found in Angiopteris evecta (Mule's foot fern).